Consider the following 223-residue polypeptide: ATP-dependent Clp protease proteolytic subunit 2 (223 aa).

The segment at 1-40 (MHAGSGNDMDITRMTPTRLDDEPDAPEPETREDDNKTLNS) is disordered. Residues 21 to 32 (DEPDAPEPETRE) show a composition bias toward acidic residues. Residue Ser124 is the Nucleophile of the active site. His149 is a catalytic residue.

It belongs to the peptidase S14 family. In terms of assembly, fourteen ClpP subunits assemble into 2 heptameric rings which stack back to back to give a disk-like structure with a central cavity, resembling the structure of eukaryotic proteasomes.

Its subcellular location is the cytoplasm. It carries out the reaction Hydrolysis of proteins to small peptides in the presence of ATP and magnesium. alpha-casein is the usual test substrate. In the absence of ATP, only oligopeptides shorter than five residues are hydrolyzed (such as succinyl-Leu-Tyr-|-NHMec, and Leu-Tyr-Leu-|-Tyr-Trp, in which cleavage of the -Tyr-|-Leu- and -Tyr-|-Trp bonds also occurs).. Functionally, cleaves peptides in various proteins in a process that requires ATP hydrolysis. Has a chymotrypsin-like activity. Plays a major role in the degradation of misfolded proteins. The chain is ATP-dependent Clp protease proteolytic subunit 2 from Gluconobacter oxydans (strain 621H) (Gluconobacter suboxydans).